The sequence spans 604 residues: Glucose oxidase 2 (604 aa).

The N-terminal stretch at 1 to 16 is a signal peptide; it reads MKLLGLLSGLVVVATA. Positions 49 and 50 each coordinate FAD. A glycan (N-linked (GlcNAc...) asparagine) is linked at N63. FAD is bound at residue E70. A glycan (N-linked (GlcNAc...) asparagine) is linked at N109. 4 residues coordinate FAD: S123, N127, G128, and S130. C184 and C226 are disulfide-bonded. N214 is a glycosylation site (N-linked (GlcNAc...) asparagine). V270 lines the FAD pocket. N-linked (GlcNAc...) asparagine glycosylation is found at N375, N408, and N517. H536 serves as the catalytic Proton acceptor. Residues R557 and V558 each contribute to the O2 site. FAD contacts are provided by G569 and M581. N-linked (GlcNAc...) asparagine glycosylation is present at N600.

This sequence belongs to the GMC oxidoreductase family. Homodimer. The cofactor is FAD.

Its subcellular location is the secreted. The protein localises to the cell wall. It localises to the cytoplasm. The protein resides in the extracellular space. It is found in the extracellular matrix. It catalyses the reaction beta-D-glucose + O2 = D-glucono-1,5-lactone + H2O2. Functionally, glucose oxidase catalyzes the oxidation of beta-D-glucose to D-glucono-delta-lactone and hydrogen peroxide in the presence of molecular oxygen. D-glucono-delta-lactone is sequentially hydrolyzed by lactonase to D-gluconic acid, and the resulting hydrogen peroxide is hydrolyzed by catalase to oxygen and water. Acts as a key factor contributing to fungal disease of apple. The production of gluconic acid leads to host tissue acidification that enhances the expression of pectolytic enzymes and the establishment of conditions for necrotrophic development of P.expansum. This Penicillium expansum (Blue mold rot fungus) protein is Glucose oxidase 2.